A 486-amino-acid chain; its full sequence is Cardiolipin synthase A (486 aa).

The next 2 membrane-spanning stretches (helical) occupy residues 3 to 23 (TVYTLVSWLAILGYWLLIAGV) and 38 to 58 (MAWLLIIYILPLVGIIAYLAV). PLD phosphodiesterase domains lie at 219–246 (MDLRQHRKMIMIDNYIAYTGSMNMVDPR) and 399–426 (EGGLLHTKSVLVDGELSLVGTVNLDMRS). Active-site residues include His224, Lys226, Asp231, His404, Lys406, and Asp411.

It belongs to the phospholipase D family. Cardiolipin synthase subfamily. ClsA sub-subfamily.

The protein localises to the cell inner membrane. It catalyses the reaction 2 a 1,2-diacyl-sn-glycero-3-phospho-(1'-sn-glycerol) = a cardiolipin + glycerol. Functionally, catalyzes the reversible phosphatidyl group transfer from one phosphatidylglycerol molecule to another to form cardiolipin (CL) (diphosphatidylglycerol) and glycerol. In Escherichia coli O157:H7 (strain EC4115 / EHEC), this protein is Cardiolipin synthase A.